The following is a 705-amino-acid chain: FAD-dependent monooxygenase ATEG_03635 (705 aa).

Residues 86–115, Val208, 308–310, and Ser408 contribute to the FAD site; these read DVLICGAGPFGLELGLILARQGISFRIVDK and RFY.

The protein belongs to the PheA/TfdB FAD monooxygenase family. The cofactor is FAD.

It participates in secondary metabolite biosynthesis. Its function is as follows. FAD-dependent monooxygenase; part of the cluster A that mediates the biosynthesis of azasperpyranones, members of the azaphilone family that exhibit anti-cancer activities. Azasperpyranones are synthesized by 2 clusters, A and B. Cluster A is responsible for the production of the polyhydric phenol moiety while the azaphilonoid scaffold is produced by the cluster B. The non-reducing polyketide synthase ATEG_03629 produces 5-methyl orsellinic acid, which is then reduced to 5-methyl orsellinic aldehyde by the NRPS-like protein ATEG_03630. 5-methyl orsellinic aldehyde is then first hydroxylated by the FAD-dependent monooxygenase ATEG_03635 and subsequently hydroxylated by the cytochrome P450 monooxygenase ATEG_03631 to produce the unstable polyhydric phenol precursor of azasperpyranones. On the other hand, the polyketide synthase ATEG_07659 is responsible for producing the 3,5-dimethyloctadienone moiety from acetyl-CoA, three malonyl-CoA, and two S-adenosyl methionines (SAM). The 3,5-dimethyloctadienone moiety is then loaded onto the SAT domain of ATEG_07661 and extended with four malonyl-CoA and one SAM, which leads to the formation of 2,4-dihydroxy-6-(5,7-dimethyl-2-oxo-trans-3-trans-5-nonadienyl)-3-methylbenzaldehyde (compound 8) after reductive release and aldol condensation. The FAD-dependent monooxygenase ATEG_07662 is the next enzyme in the biosynthesis sequence and hydroxylates the side chain at the benzylic position of compound 8. In Aspergillus nidulans, afoF, the ortholog of the FAD-dependent oxygenase ATEG_07660, is the key enzyme for the biosynthesis of asperfuranone by catalyzing the hydroxylation at C-8 of to prevent the formation of a six-membered ring hemiacetal intermediate and thus facilitating the formation of a five-membered ring to produce asperfuranone. In Aspergillus terreus, ATEG_07660 is probably not functional, which leads to the formation of the six-membered ring hemiacetal intermediate presperpyranone instead of asperfuranone. Finally, ATEG_03636 is involved in the condensation of the polyhydric phenol moiety produced by cluster A and the perasperpyranone precursor produced by cluster B, to yield azasperpyranone A. Further modifications of azasperpyranone A result in the production of derivatives, including azasperpyranone B to F. The polypeptide is FAD-dependent monooxygenase ATEG_03635 (Aspergillus terreus (strain NIH 2624 / FGSC A1156)).